Here is a 588-residue protein sequence, read N- to C-terminus: Glutamate--tRNA ligase (588 aa).

The 'HIGH' region signature appears at 112-122 (PNPDFYLHLGS).

It belongs to the class-I aminoacyl-tRNA synthetase family. Glutamate--tRNA ligase type 2 subfamily.

It is found in the cytoplasm. It catalyses the reaction tRNA(Glu) + L-glutamate + ATP = L-glutamyl-tRNA(Glu) + AMP + diphosphate. Its function is as follows. Catalyzes the attachment of glutamate to tRNA(Glu) in a two-step reaction: glutamate is first activated by ATP to form Glu-AMP and then transferred to the acceptor end of tRNA(Glu). The polypeptide is Glutamate--tRNA ligase (Caldivirga maquilingensis (strain ATCC 700844 / DSM 13496 / JCM 10307 / IC-167)).